Consider the following 554-residue polypeptide: Outer envelope protein 61 (554 aa).

Topologically, residues Met-1–Lys-525 are cytoplasmic. TPR repeat units lie at residues Ala-103 to Ile-136 and Val-180 to Asp-213. Disordered stretches follow at residues Thr-245–Val-269 and Ala-395–Pro-439. The span at Glu-254–Asn-263 shows a compositional bias: basic and acidic residues. The span at Ser-412 to Ser-423 shows a compositional bias: low complexity. Residues Trp-526 to Leu-546 form a helical membrane-spanning segment. Residues His-547–Asn-554 are Lumenal-facing.

Interacts (via TPR region) with HSP70-1, but not with HSP90-2. Interacts with ERDJ2A and ERDJ2B. In the ER membrane, associates with ERDJ2 in membrane complexes of 140 and 200 kDa and specifically interacts with the HSP70 and HSP90 chaperones via its TPR domain. As to expression, ubiquitous. Highest expression in leaves and lowest in roots.

It localises to the endoplasmic reticulum membrane. It is found in the plastid. The protein resides in the chloroplast outer membrane. In terms of biological role, plays a role in protein import into the endoplasmic reticulum (ER). May function as chaperone docking protein during post-translational protein translocation into the ER. Chaperone receptor mediating Hsp70-dependent protein targeting to chloroplasts. Interacts specifically with some chloroplast precursors, but not with mitochondrial precursors. Able to select precursors for delivery to the chloroplast translocase independently of Hsp70. This is Outer envelope protein 61 (OEP61) from Arabidopsis thaliana (Mouse-ear cress).